A 194-amino-acid polypeptide reads, in one-letter code: FMN-dependent NADH:quinone oxidoreductase 1 (194 aa).

FMN contacts are provided by residues serine 9 and 85 to 88; that span reads MYNF.

Belongs to the azoreductase type 1 family. As to quaternary structure, homodimer. FMN is required as a cofactor.

The catalysed reaction is 2 a quinone + NADH + H(+) = 2 a 1,4-benzosemiquinone + NAD(+). It carries out the reaction N,N-dimethyl-1,4-phenylenediamine + anthranilate + 2 NAD(+) = 2-(4-dimethylaminophenyl)diazenylbenzoate + 2 NADH + 2 H(+). Quinone reductase that provides resistance to thiol-specific stress caused by electrophilic quinones. Its function is as follows. Also exhibits azoreductase activity. Catalyzes the reductive cleavage of the azo bond in aromatic azo compounds to the corresponding amines. The sequence is that of FMN-dependent NADH:quinone oxidoreductase 1 from Xanthomonas euvesicatoria pv. vesicatoria (strain 85-10) (Xanthomonas campestris pv. vesicatoria).